A 161-amino-acid polypeptide reads, in one-letter code: Ubiquitin D (161 aa).

2 consecutive Ubiquitin-like domains span residues 3-77 and 86-159; these read SCVC…LKVV and LSLV…AHCI.

It belongs to the ubiquitin D family. Interacts directly with the 26S proteasome. Interacts with NUB1; this interaction facilitates the linking of UBD-conjugated target protein to the proteasome complex and accelerates its own degradation and that of its conjugates. Interacts (via ubiquitin-like 1 domain) with the spindle checkpoint protein MAD2L1 during mitosis. Present in aggresomes of proteasome inhibited cells. Interacts with HDAC6 under proteasome impairment conditions. Forms a thioester with UBA6 in cells stimulated with tumor necrosis factor-alpha (TNFa) and interferon-gamma (IFNg). Interacts with SQSTM1 and TP53/p53. Post-translationally, can be acetylated.

The protein resides in the nucleus. Its subcellular location is the cytoplasm. Functionally, ubiquitin-like protein modifier which can be covalently attached to target proteins and subsequently leads to their degradation by the 26S proteasome, in a NUB1-dependent manner. Conjugation to the target protein is activated by UBA6 via adenylation of its C-terminal glycine. Probably functions as a survival factor. Promotes the expression of the proteasome subunit beta type-9 (PSMB9/LMP2). Regulates TNF-alpha-induced and LPS-mediated activation of the central mediator of innate immunity NF-kappa-B by promoting TNF-alpha-mediated proteasomal degradation of ubiquitinated-I-kappa-B-alpha. Required for TNF-alpha-induced p65 nuclear translocation in renal tubular epithelial cells (RTECs). May be involved in dendritic cell (DC) maturation, the process by which immature dendritic cells differentiate into fully competent antigen-presenting cells that initiate T-cell responses. Mediates mitotic non-disjunction and chromosome instability, in long-term in vitro culture and cancers, by abbreviating mitotic phase and impairing the kinetochore localization of MAD2L1 during the prometaphase stage of the cell cycle. May be involved in the formation of aggresomes when proteasome is saturated or impaired. Mediates apoptosis in a caspase-dependent manner, especially in renal epithelium and tubular cells during renal diseases. This is Ubiquitin D (Ubd) from Rattus norvegicus (Rat).